Here is a 345-residue protein sequence, read N- to C-terminus: Phosphoribosylformylglycinamidine cyclo-ligase (345 aa).

Belongs to the AIR synthase family.

The protein localises to the cytoplasm. It catalyses the reaction 2-formamido-N(1)-(5-O-phospho-beta-D-ribosyl)acetamidine + ATP = 5-amino-1-(5-phospho-beta-D-ribosyl)imidazole + ADP + phosphate + H(+). Its pathway is purine metabolism; IMP biosynthesis via de novo pathway; 5-amino-1-(5-phospho-D-ribosyl)imidazole from N(2)-formyl-N(1)-(5-phospho-D-ribosyl)glycinamide: step 2/2. The chain is Phosphoribosylformylglycinamidine cyclo-ligase from Escherichia coli (strain K12 / MC4100 / BW2952).